The following is a 751-amino-acid chain: Trehalose phosphorylase (751 aa).

Positions 1–26 (MSTPHHQFESKSSTAIRRRLSSSVSS) are excised as a propeptide. A disordered region spans residues 1 to 28 (MSTPHHQFESKSSTAIRRRLSSSVSSKQ).

The protein belongs to the glycosyltransferase group 1 family. Glycosyltransferase 4 subfamily. Homodimer. As to expression, expressed in mycelia, stipes and pilei.

The enzyme catalyses alpha,alpha-trehalose + phosphate = alpha-D-glucose + alpha-D-glucose 1-phosphate. Reversibly catalyzes the synthesis and degradation of trehalose from glucose and alpha-D-glucose 1-phosphate. The equilibrium lies in the direction of trehalose synthesis. The protein is Trehalose phosphorylase of Pleurotus sajor-caju (Oyster mushroom).